Consider the following 720-residue polypeptide: MTEPEITPELIAAHGLKPDEYQRILEIIGRAPTFTELGIFSAMWNEHCSYKSSKKWLRTLPTTGPQVICGPGENAGVVDIGDGQAVIFKMESHNHPSYIEPYQGAATGVGGILRDVFTMGARPIAAMNALSFGVPDHPKTAHIVKGVVEGIGGYGNAFGVPTVGGEVRFHRAYNGNCLVNAFAAGLADADRIFYSAASGVGMPVVYLGAKTGRDGVGGATMASAEFDDTIEEKRPTVQVGDPFTEKRLLEACLELMASDSVISIQDMGAAGLTCSAVEMGDKGDLGIRLQLDAVPQREANMTAYEMMLSESQERMLMVLKPEKEAVARAIFEKWDLDFAIVGETIPEDRFLILHGNEVKADLPLKALSGTAPEYDRPWIETPAAAPLGAVPEVDPIEGLKALIGSPSYAHKAWVWEQYDSQVMADTVRAPGLGAGVVRVHGTPKALAFTSDVTPRYVKANPFEGGKQAVAEAYRNLTAVGAKPLATTDNMNFGNPEKPEIMGQFVGAIKGIGAAVAALDMPIVSGNVSLYNETDGVGILPTPTIGAVGLLTSLDELIAGQPEEGDLALVIGTTAGHLGQSALLAEMFGREEGDAPPVDLEAEKRHGEFLRANRKLVRAAADLSDGGLALAAFEMAEAAGLGLTLTPSGTAALFGEDQARYLVACAPDRAEALQAAAEAAGVPLQEVGRFGGATVTLAGASAPLADLSRLYRRAFAEAIGG.

The active site involves histidine 47. Positions 50 and 89 each coordinate ATP. Glutamate 91 lines the Mg(2+) pocket. Residues 92-95 (SHNH) and arginine 114 contribute to the substrate site. Catalysis depends on histidine 93, which acts as the Proton acceptor. Aspartate 115 provides a ligand contact to Mg(2+). Glutamine 238 contacts substrate. Aspartate 266 is a Mg(2+) binding site. Substrate is bound at residue 310-312 (ESQ). Positions 488 and 525 each coordinate ATP. Asparagine 526 is a binding site for Mg(2+). Serine 528 is a substrate binding site.

It belongs to the FGAMS family. Monomer. Part of the FGAM synthase complex composed of 1 PurL, 1 PurQ and 2 PurS subunits.

It localises to the cytoplasm. The enzyme catalyses N(2)-formyl-N(1)-(5-phospho-beta-D-ribosyl)glycinamide + L-glutamine + ATP + H2O = 2-formamido-N(1)-(5-O-phospho-beta-D-ribosyl)acetamidine + L-glutamate + ADP + phosphate + H(+). Its pathway is purine metabolism; IMP biosynthesis via de novo pathway; 5-amino-1-(5-phospho-D-ribosyl)imidazole from N(2)-formyl-N(1)-(5-phospho-D-ribosyl)glycinamide: step 1/2. In terms of biological role, part of the phosphoribosylformylglycinamidine synthase complex involved in the purines biosynthetic pathway. Catalyzes the ATP-dependent conversion of formylglycinamide ribonucleotide (FGAR) and glutamine to yield formylglycinamidine ribonucleotide (FGAM) and glutamate. The FGAM synthase complex is composed of three subunits. PurQ produces an ammonia molecule by converting glutamine to glutamate. PurL transfers the ammonia molecule to FGAR to form FGAM in an ATP-dependent manner. PurS interacts with PurQ and PurL and is thought to assist in the transfer of the ammonia molecule from PurQ to PurL. The polypeptide is Phosphoribosylformylglycinamidine synthase subunit PurL (Cereibacter sphaeroides (strain ATCC 17023 / DSM 158 / JCM 6121 / CCUG 31486 / LMG 2827 / NBRC 12203 / NCIMB 8253 / ATH 2.4.1.) (Rhodobacter sphaeroides)).